A 1501-amino-acid chain; its full sequence is Multidrug resistance protein CDR1 (1501 aa).

The disordered stretch occupies residues 1–30 (MSDSKMSSQDESKLEKAISQDSSSENHSIN). Over 1–513 (MSDSKMSSQD…NFLRMKGDPS (513 aa)) the chain is Cytoplasmic. A compositionally biased stretch (basic and acidic residues) spans 8–18 (SQDESKLEKAI). The 255-residue stretch at 150–404 (LATEGFRHFQ…FEKMGWKCPQ (255 aa)) folds into the ABC transporter 1 domain. Residues 514–534 (IPIFSVFGQLVMGLILSSVFY) traverse the membrane as a helical segment. N-linked (GlcNAc...) asparagine glycosylation occurs at Asn-535. A run of 4 helical transmembrane segments spans residues 549-569 (AMFF…MSLF), 598-618 (LPVK…MVNF), 623-643 (GRFF…SHLF), and 655-675 (GAMT…GFVI). A glycan (N-linked (GlcNAc...) asparagine) is linked at Asn-724. Residues 765–785 (LGITIGFAVFFLAIYIALTEF) form a helical membrane-spanning segment. Residues 786–1195 (NKGAMQKGEI…TIVQDWRSPG (410 aa)) are Cytoplasmic-facing. The ABC transporter 2 domain occupies 859 to 1103 (FFWRDLTYQV…MINYFEKYGA (245 aa)). Position 895 to 902 (895 to 902 (GASGAGKT)) interacts with ATP. A run of 6 helical transmembrane segments spans residues 1196-1216 (YIYS…FSFF), 1230-1250 (FSVF…LPYF), 1281-1301 (IPYQ…PLGL), 1315-1335 (GVLM…MGQL), 1356-1376 (MCLN…FWIF), and 1467-1487 (FGIF…FYWL).

Belongs to the ABC transporter superfamily. ABCG family. PDR (TC 3.A.1.205) subfamily.

It localises to the membrane. Its function is as follows. Transporter, whose physiological function is not yet established. Confers resistance to the chemical cycloheximide. The polypeptide is Multidrug resistance protein CDR1 (CDR1) (Candida albicans (Yeast)).